The following is a 318-amino-acid chain: Homeobox protein Nkx-2.5 (318 aa).

Residues 137 to 196 (RRKPRVLFSQAQVYELERRFKQQRYLSAPERDQLASVLKLTSTQVKIWFQNRRYKCKRQR) constitute a DNA-binding region (homeobox).

This sequence belongs to the NK-2 homeobox family. As to quaternary structure, homodimer (via the homeobox); binds DNA as homodimer. Interacts (via the homeobox) with TBX5 (via the T-box); this complex binds DNA. Interacts with HIPK1 and HIPK2, but not HIPK3. Interacts with the C-terminal zinc finger of GATA4 through its homeobox domain. Also interacts with JARID2 which represses its ability to activate transcription of ANF. Interacts with FBLIM1. Interacts with TBX18. Interacts with histone methyltransferase NSD2 (via HMG box). Interacts with NEDD9. Interacts with TBX1. In terms of tissue distribution, predominantly in the adult and embryonic heart, and to a lesser extent in lingual muscle, spleen and stomach.

The protein resides in the nucleus. Functionally, transcription factor required for the development of the heart and the spleen. During heart development, acts as a transcriptional activator of NPPA/ANF in cooperation with GATA4. May cooperate with TBX2 to negatively modulate expression of NPPA/ANF in the atrioventricular canal. Binds to the core DNA motif of NPPA promoter. Together with PBX1, required for spleen development through a mechanism that involves CDKN2B repression. Positively regulates transcription of genes such as COL3A1 and MMP2, resulting in increased pulmonary endothelial fibrosis in response to hypoxia. This Mus musculus (Mouse) protein is Homeobox protein Nkx-2.5 (Nkx2-5).